We begin with the raw amino-acid sequence, 530 residues long: Ubiquitin carboxyl-terminal hydrolase 17 (530 aa).

Residues 80 to 375 form the USP domain; sequence AGLQNMGNTC…QAYVLFYIQK (296 aa). Cys-89 acts as the Nucleophile in catalysis. The active-site Proton acceptor is the His-334. Composition is skewed to basic and acidic residues over residues 382–392 and 398–413; these read SESVSRGREPR and DTDRRATQGELKRDHP. 2 disordered regions span residues 382–416 and 490–530; these read SESVSRGREPRALGAEDTDRRATQGELKRDHPCLQ and SSTT…LVCQ. The mediates interaction with SUDS3 stretch occupies residues 399-530; sequence TDRRATQGEL…HSKRALLVCQ (132 aa). Residues 498–510 show a composition bias toward polar residues; that stretch reads ESVNTGTLASLQG. The segment covering 511–524 has biased composition (basic residues); sequence RTRRSKGKNKHSKR.

Belongs to the peptidase C19 family. USP17 subfamily. Interacts with SUDS3; the interaction is direct. Broadly expressed.

The protein localises to the nucleus. It localises to the endoplasmic reticulum. The enzyme catalyses Thiol-dependent hydrolysis of ester, thioester, amide, peptide and isopeptide bonds formed by the C-terminal Gly of ubiquitin (a 76-residue protein attached to proteins as an intracellular targeting signal).. In terms of biological role, deubiquitinating enzyme that removes conjugated ubiquitin from specific proteins to regulate different cellular processes. Regulates cell proliferation by deubiquitinating and inhibiting RCE1 thereby controlling the small GTPases NRAS and HRAS localization and activation. In parallel, mediates deubiquitination of CDC25A, preventing CDC25A degradation by the proteasome during the G1/S and G2/M phases promoting cell-cycle progression. Also regulates cell proliferation and apoptosis through deubiquitination of SUDS3 a regulator of histone deacetylation. Through activation of the Rho family GTPases RAC1A, CDC42 and RHOA, regulates cell migration. Through the cleavage of 'Lys-48'- and 'Lys-63'-linked polyubiquitin chains of the cytoplasmic innate immune receptors RIGI and IFIH1 stimulates the cellular response to viral infection. In Homo sapiens (Human), this protein is Ubiquitin carboxyl-terminal hydrolase 17 (USP17L2).